We begin with the raw amino-acid sequence, 208 residues long: Adenylyl-sulfate kinase 3 (208 aa).

37-45 (GLSGSGKST) serves as a coordination point for ATP. Residues D67, R70, R84, N87, 110–111 (IS), and G160 contribute to the substrate site. Catalysis depends on S111, which acts as the Phosphoserine intermediate.

Belongs to the APS kinase family. Expressed in root vasculature, root tips, leaf epidermal and guard cells, pollen grains and radicle of immature seeds.

The protein localises to the cytoplasm. It is found in the cytosol. The enzyme catalyses adenosine 5'-phosphosulfate + ATP = 3'-phosphoadenylyl sulfate + ADP + H(+). It functions in the pathway sulfur metabolism; hydrogen sulfide biosynthesis; sulfite from sulfate: step 2/3. Its function is as follows. Catalyzes the synthesis of activated sulfate for the sulfation of secondary metabolites, including the glucosinolates. Essential for plant reproduction and viability. This Arabidopsis thaliana (Mouse-ear cress) protein is Adenylyl-sulfate kinase 3.